Reading from the N-terminus, the 224-residue chain is Histone H1.03 (224 aa).

2 stretches are compositionally biased toward low complexity: residues 1-22 and 30-42; these read MAETAPVAAPDVAAAPTPAKAA and AAGGAKARKPAGP. Disordered regions lie at residues 1–43 and 99–224; these read MAET…AGPS and QTKG…PKKK. The 74-residue stretch at 40–113 folds into the H15 domain; the sequence is AGPSVTELIT…GASGSFRLSK (74 aa). Basic residues-rich tracts occupy residues 122-137, 145-162, 170-188, and 197-224; these read APKKKTPAAKPKKPAA, KKPKKAVAVKKSPKKAKK, KAAKSPKKVTKAAKPKKAV, and KAVKPKAAKPKATKPKAAKAKKAAPKKK.

The protein belongs to the histone H1/H5 family.

It localises to the nucleus. Its subcellular location is the chromosome. In terms of biological role, histones H1 are necessary for the condensation of nucleosome chains into higher-order structures. This is Histone H1.03 from Gallus gallus (Chicken).